The sequence spans 485 residues: Adenosylhomocysteinase (485 aa).

Residues T64, D139, and E205 each coordinate substrate. An NAD(+)-binding site is contributed by 206–208 (TTT). The substrate site is built by K235 and D239. NAD(+) is bound by residues N240, 269–274 (GYGDVG), E292, N327, 348–350 (IGH), and N397.

Belongs to the adenosylhomocysteinase family. The cofactor is NAD(+).

The catalysed reaction is S-adenosyl-L-homocysteine + H2O = L-homocysteine + adenosine. The protein operates within amino-acid biosynthesis; L-homocysteine biosynthesis; L-homocysteine from S-adenosyl-L-homocysteine: step 1/1. Adenosylhomocysteine is a competitive inhibitor of S-adenosyl-L-methionine-dependent methyl transferase reactions; therefore adenosylhomocysteinase may play a key role in the control of methylations via regulation of the intracellular concentration of adenosylhomocysteine. In Phalaenopsis sp. (Moth orchid), this protein is Adenosylhomocysteinase (SAHH).